The sequence spans 610 residues: MYSLSRILQRSQRYNFAPSSFGAVSKLEVSSGGDKERVFKSFGLIYSKPQGLVRLYSARDVFSRFFGIHKLSSIADAKDKGDEVVREEELSESEEAVPVSGDVPEGVVDDDSLFEPELGSDNDDLEIEEKHSKDGGKPTKKRGQSELYESIVAYKSVKHVLEKWVKEGKDLSQAEVTLAIHNLRKRKSYAMCLQLWEWLGANTQFEFTEANYASQLDLVAKVHSLQKAEIFLKDIPESSRGEVVYRTLLANCVLKHHVNKAEDIFNKMKELKFPTSVFACNQLLLLYSMHDRKKISDVLLLMERENIKPSRATYHFLINSKGLAGDITGMEKIVETIKEEGIELDPELQSILAKYYIRAGLKERAQDLMKEIEGKGLQQTPWVCRSLLPLYADIGDSDNVRRLSRFVDQNPRYDNCISAIKAWGKLKEVEEAEAVFERLVEKYKIFPMMPYFALMEIYTENKMLAKGRDLVKRMGNAGIAIGPSTWHALVKLYIKAGEVGKAELILNRATKDNKMRPMFTTYMAILEEYAKRGDVHNTEKVFMKMKRASYAAQLMQYETVLLAYINAKTPAYGMIERMKADNVFPNKSLAAKLAQVNPFKKCPVSVLLDI.

A mitochondrion-targeting transit peptide spans 1–71 (MYSLSRILQR…FSRFFGIHKL (71 aa)). The segment at 88–142 (EELSESEEAVPVSGDVPEGVVDDDSLFEPELGSDNDDLEIEEKHSKDGGKPTKKR) is disordered. Acidic residues predominate over residues 107 to 127 (VVDDDSLFEPELGSDNDDLEI). Residues 128 to 137 (EEKHSKDGGK) show a composition bias toward basic and acidic residues. PPR repeat units follow at residues 241-275 (GEVV…KFPT), 276-309 (SVFA…NIKP), 310-344 (SRAT…GIEL), 345-379 (DPEL…GLQQ), 380-410 (TPWV…VDQN), 412-442 (RYDN…LVEK), 447-481 (PMMP…GIAI), 482-517 (GPST…KMRP), and 518-552 (MFTT…SYAA).

It belongs to the PPR family. P subfamily.

It localises to the mitochondrion. The sequence is that of Pentatricopeptide repeat-containing protein At3g15590, mitochondrial from Arabidopsis thaliana (Mouse-ear cress).